A 210-amino-acid polypeptide reads, in one-letter code: Phosphoenolpyruvate guanylyltransferase (210 aa).

Positions 130, 146, and 149 each coordinate phosphoenolpyruvate.

It belongs to the CofC family.

It catalyses the reaction phosphoenolpyruvate + GTP + H(+) = enolpyruvoyl-2-diphospho-5'-guanosine + diphosphate. Its pathway is cofactor biosynthesis; coenzyme F420 biosynthesis. In terms of biological role, guanylyltransferase that catalyzes the activation of phosphoenolpyruvate (PEP) as enolpyruvoyl-2-diphospho-5'-guanosine, via the condensation of PEP with GTP. It is involved in the biosynthesis of coenzyme F420, a hydride carrier cofactor. This chain is Phosphoenolpyruvate guanylyltransferase, found in Roseiflexus castenholzii (strain DSM 13941 / HLO8).